A 29-amino-acid chain; its full sequence is Dermaseptin-S5 (29 aa).

This sequence belongs to the frog skin active peptide (FSAP) family. Dermaseptin subfamily. As to expression, expressed by the skin glands.

Its subcellular location is the secreted. Potent antimicrobial peptide with activity against bacteria and protozoa. Also has activity against fungi. Probably acts by disturbing membrane functions with its amphipathic structure. The sequence is that of Dermaseptin-S5 from Phyllomedusa sauvagei (Sauvage's leaf frog).